The chain runs to 359 residues: Probable S-adenosylmethionine-dependent methyltransferase At5g38100 (359 aa).

The S-adenosyl-L-homocysteine site is built by Tyr19, Cys63, Asn68, Asp104, Ser133, and Phe134. 3 residues coordinate Mg(2+): Asn172, Asp258, and Phe260.

The protein belongs to the methyltransferase superfamily. Type-7 methyltransferase family. In terms of assembly, homodimer. Requires Mg(2+) as cofactor.

This chain is Probable S-adenosylmethionine-dependent methyltransferase At5g38100, found in Arabidopsis thaliana (Mouse-ear cress).